We begin with the raw amino-acid sequence, 382 residues long: uncharacterized protein (382 aa).

The next 10 membrane-spanning stretches (helical) occupy residues 8–28, 41–61, 73–93, 94–114, 133–153, 157–177, 208–228, 274–294, 325–345, and 349–369; these read VLLL…LNTL, WQVG…TLIA, SYHC…LTVD, FWSW…IWVI, AAYM…LGIV, LLSV…PLLF, GCII…LYLS, VVIL…ALFI, ALLM…SLLM, and SDNL…MMLL.

The protein belongs to the major facilitator superfamily. YcaD (TC 2.A.1.26) family.

The protein resides in the cell inner membrane. This is an uncharacterized protein from Yersinia pseudotuberculosis serotype O:3 (strain YPIII).